We begin with the raw amino-acid sequence, 217 residues long: Probable GTP-binding protein EngB (217 aa).

The 184-residue stretch at 24 to 207 folds into the EngB-type G domain; that stretch reads SQPEICFAGR…HALIESWLIP (184 aa). Residues 32–39, 59–63, 81–84, 148–151, and 185–188 each bind GTP; these read GRSNAGKS, GRTQH, DLPG, TKCD, and LFSA. The Mg(2+) site is built by serine 39 and threonine 61.

The protein belongs to the TRAFAC class TrmE-Era-EngA-EngB-Septin-like GTPase superfamily. EngB GTPase family. Mg(2+) is required as a cofactor.

Necessary for normal cell division and for the maintenance of normal septation. The protein is Probable GTP-binding protein EngB of Paraburkholderia xenovorans (strain LB400).